Consider the following 150-residue polypeptide: Small ribosomal subunit protein uS7cz/uS7cy (150 aa).

Belongs to the universal ribosomal protein uS7 family. As to quaternary structure, part of the 30S ribosomal subunit.

Its subcellular location is the plastid. It is found in the chloroplast. In terms of biological role, one of the primary rRNA binding proteins, it binds directly to 16S rRNA where it nucleates assembly of the head domain of the 30S subunit. The protein is Small ribosomal subunit protein uS7cz/uS7cy (rps7-A) of Adiantum capillus-veneris (Maidenhair fern).